The following is a 1125-amino-acid chain: Exportin-6 (1125 aa).

Ala-2 bears the N-acetylalanine mark. The Importin N-terminal domain occupies 31-97 (IEELLNNFAQ…RSCLPKLLLA (67 aa)). Ser-199 bears the Phosphoserine mark. 2 positions are modified to phosphothreonine: Thr-201 and Thr-204. A phosphoserine mark is found at Ser-208 and Ser-224.

Belongs to the exportin family. Found in a complex with XPO6, Ran, ACTB and PFN1. Interacts with ACTB. Interacts with ACTB in a RanGTP-dependent manner.

Its subcellular location is the nucleus. It is found in the cytoplasm. Its function is as follows. Mediates the nuclear export of actin and profilin-actin complexes in somatic cells. The polypeptide is Exportin-6 (XPO6) (Homo sapiens (Human)).